Consider the following 121-residue polypeptide: Putative iron-sulfur cluster insertion protein ErpA (121 aa).

Iron-sulfur cluster is bound by residues cysteine 49, cysteine 113, and cysteine 115.

This sequence belongs to the HesB/IscA family. In terms of assembly, homodimer. It depends on iron-sulfur cluster as a cofactor.

Its function is as follows. Required for insertion of 4Fe-4S clusters. The protein is Putative iron-sulfur cluster insertion protein ErpA of Paracidovorax citrulli (strain AAC00-1) (Acidovorax citrulli).